Consider the following 367-residue polypeptide: Phospho-N-acetylmuramoyl-pentapeptide-transferase (367 aa).

The next 10 helical transmembrane spans lie at 34 to 54 (GAVV…IDHL), 78 to 98 (TPTM…VLWA), 101 to 121 (LNPY…VGFY), 135 to 155 (FGSK…CYAL), 175 to 195 (TVLH…VGAG), 206 to 226 (GLAI…AYLA), 246 to 266 (LAVL…FNAP), 270 to 290 (IFMG…IAVA), 295 to 315 (IVLA…IVQV), and 344 to 364 (QIVI…LSTL).

This sequence belongs to the glycosyltransferase 4 family. MraY subfamily. Mg(2+) serves as cofactor.

It localises to the cell inner membrane. It catalyses the reaction UDP-N-acetyl-alpha-D-muramoyl-L-alanyl-gamma-D-glutamyl-meso-2,6-diaminopimeloyl-D-alanyl-D-alanine + di-trans,octa-cis-undecaprenyl phosphate = di-trans,octa-cis-undecaprenyl diphospho-N-acetyl-alpha-D-muramoyl-L-alanyl-D-glutamyl-meso-2,6-diaminopimeloyl-D-alanyl-D-alanine + UMP. It participates in cell wall biogenesis; peptidoglycan biosynthesis. In terms of biological role, catalyzes the initial step of the lipid cycle reactions in the biosynthesis of the cell wall peptidoglycan: transfers peptidoglycan precursor phospho-MurNAc-pentapeptide from UDP-MurNAc-pentapeptide onto the lipid carrier undecaprenyl phosphate, yielding undecaprenyl-pyrophosphoryl-MurNAc-pentapeptide, known as lipid I. This is Phospho-N-acetylmuramoyl-pentapeptide-transferase from Bradyrhizobium diazoefficiens (strain JCM 10833 / BCRC 13528 / IAM 13628 / NBRC 14792 / USDA 110).